Reading from the N-terminus, the 895-residue chain is Histone-lysine N-methyltransferase EZ3 (895 aa).

Residues Met1 to Gln13 are compositionally biased toward low complexity. Disordered regions lie at residues Met1 to Ser30 and Ser396 to Arg446. The span at Ser396–Pro422 shows a compositional bias: polar residues. The span at Arg427 to Pro436 shows a compositional bias: basic residues. In terms of domain architecture, SANT spans Thr528–Ala578. The CXC domain maps to Ala628 to Asp732. Residues Gln747 to Arg862 enclose the SET domain. Positions Ala870–Arg895 are disordered. Basic and acidic residues predominate over residues Arg873–Val885. Positions Ser886–Arg895 are enriched in basic residues.

This sequence belongs to the class V-like SAM-binding methyltransferase superfamily. Histone-lysine methyltransferase family. EZ subfamily. As to expression, widely expressed.

The protein resides in the nucleus. The enzyme catalyses L-lysyl(27)-[histone H3] + 3 S-adenosyl-L-methionine = N(6),N(6),N(6)-trimethyl-L-lysyl(27)-[histone H3] + 3 S-adenosyl-L-homocysteine + 3 H(+). Polycomb group (PcG) protein. Catalytic subunit of some PcG multiprotein complex, which methylates 'Lys-27' of histone H3, leading to transcriptional repression of the affected target genes. PcG proteins are not required to initiate repression, but to maintain it during later stages of development. The protein is Histone-lysine N-methyltransferase EZ3 (EZ3) of Zea mays (Maize).